The primary structure comprises 345 residues: N-acetyl-gamma-glutamyl-phosphate reductase (345 aa).

C149 is an active-site residue.

It belongs to the NAGSA dehydrogenase family. Type 1 subfamily.

The protein resides in the cytoplasm. It catalyses the reaction N-acetyl-L-glutamate 5-semialdehyde + phosphate + NADP(+) = N-acetyl-L-glutamyl 5-phosphate + NADPH + H(+). Its pathway is amino-acid biosynthesis; L-arginine biosynthesis; N(2)-acetyl-L-ornithine from L-glutamate: step 3/4. Catalyzes the NADPH-dependent reduction of N-acetyl-5-glutamyl phosphate to yield N-acetyl-L-glutamate 5-semialdehyde. The sequence is that of N-acetyl-gamma-glutamyl-phosphate reductase from Geobacillus stearothermophilus (Bacillus stearothermophilus).